The following is a 1087-amino-acid chain: Exportin-7 (1087 aa).

Ala2 is modified (N-acetylalanine). The Importin N-terminal domain occupies 30-96; it reads AEKALVEFTN…RNYVLNYLAT (67 aa). Ser570 is modified (phosphoserine).

Belongs to the exportin family. As to quaternary structure, binds to nucleoporins. Found in a complex with XPO7, EIF4A1, ARHGAP1, VPS26A, VPS29, VPS35 and SFN. Interacts with ARHGAP1 and SFN. Interacts with Ran and cargo proteins in a GTP-dependent manner. Highly expressed in testis and spleen, moderate in kidney and liver and low in heart, brain, lung and skeletal muscle.

It is found in the cytoplasm. Its subcellular location is the nucleus. Functionally, mediates the nuclear export of proteins (cargos) with broad substrate specificity. In the nucleus binds cooperatively to its cargo and to the GTPase Ran in its active GTP-bound form. Docking of this trimeric complex to the nuclear pore complex (NPC) is mediated through binding to nucleoporins. Upon transit of a nuclear export complex into the cytoplasm, disassembling of the complex and hydrolysis of Ran-GTP to Ran-GDP (induced by RANBP1 and RANGAP1, respectively) cause release of the cargo from the export receptor. XPO7 then return to the nuclear compartment and mediate another round of transport. The directionality of nuclear export is thought to be conferred by an asymmetric distribution of the GTP- and GDP-bound forms of Ran between the cytoplasm and nucleus. The sequence is that of Exportin-7 (Xpo7) from Mus musculus (Mouse).